Reading from the N-terminus, the 204-residue chain is Double homeobox protein A (204 aa).

The homeobox 1 DNA-binding region spans 15-74; that stretch reads HRRCRTKFTEEQLKILINTFNQKPYPGYATKQKLALEINTEESRIQIWFQNRRARHGFQK. Disordered stretches follow at residues 73-101 and 163-204; these read QKRP…SREA and EPVA…ARTW. A compositionally biased stretch (polar residues) spans 81–90; it reads LESSQSQGQD. The homeobox 2 DNA-binding region spans 101–160; sequence ARRCRTTYSASQLHTLIKAFMKNPYPGIDSREELAKEIGVPESRVQIWFQNRRSRLLLQR. Over residues 184–197 the composition is skewed to polar residues; that stretch reads EDTQNGTNFTSDSH.

It belongs to the paired homeobox family. As to expression, expressed in embryonic stem cells.

It localises to the nucleus. Transcription factor that acts as a repressor. The sequence is that of Double homeobox protein A from Homo sapiens (Human).